The chain runs to 214 residues: Uridine kinase (214 aa).

Residue 15 to 22 (GASASGKS) participates in ATP binding.

It belongs to the uridine kinase family.

It localises to the cytoplasm. The enzyme catalyses uridine + ATP = UMP + ADP + H(+). It catalyses the reaction cytidine + ATP = CMP + ADP + H(+). It participates in pyrimidine metabolism; CTP biosynthesis via salvage pathway; CTP from cytidine: step 1/3. The protein operates within pyrimidine metabolism; UMP biosynthesis via salvage pathway; UMP from uridine: step 1/1. This chain is Uridine kinase, found in Aeromonas hydrophila subsp. hydrophila (strain ATCC 7966 / DSM 30187 / BCRC 13018 / CCUG 14551 / JCM 1027 / KCTC 2358 / NCIMB 9240 / NCTC 8049).